We begin with the raw amino-acid sequence, 268 residues long: Cytolethal distending toxin subunit A (268 aa).

A signal peptide spans 1-19 (MQKIIVFILCCFMTFFLYA). The N-palmitoyl cysteine moiety is linked to residue Cys20. Cys20 is lipidated: S-diacylglycerol cysteine. Residues 112-252 (VSDFLTILGP…DNFDQQWFLT (141 aa)) enclose the Ricin B-type lectin domain. The segment at 129–140 (WALAQGNWIWGY) is mediates binding to target cells.

In terms of assembly, heterotrimer of 3 subunits, CdtA, CdtB and CdtC.

The protein resides in the cell outer membrane. Functionally, CDTs are cytotoxins which induce cell distension, growth arrest in G2/M phase, nucleus swelling, and chromatin fragmentation in HeLa cells. The polypeptide is Cytolethal distending toxin subunit A (cdtA) (Campylobacter jejuni subsp. jejuni serotype O:2 (strain ATCC 700819 / NCTC 11168)).